The following is a 101-amino-acid chain: MQKFLDELEKVRNHTEDYDVYNSEAERTFRGLKAKFQKLIGKRALYICKSTKESRVVTIEAAYDRYIVLSYKYYGMDYEGSTKMSVTYQALLSGEDRLDVE.

The chain is Gene 33 protein (33) from Bacillus subtilis (Bacteriophage SP01).